The chain runs to 315 residues: Homoserine kinase (315 aa).

91–101 (PIGSGLGSSAS) provides a ligand contact to ATP.

The protein belongs to the GHMP kinase family. Homoserine kinase subfamily.

It is found in the cytoplasm. It catalyses the reaction L-homoserine + ATP = O-phospho-L-homoserine + ADP + H(+). Its pathway is amino-acid biosynthesis; L-threonine biosynthesis; L-threonine from L-aspartate: step 4/5. Its function is as follows. Catalyzes the ATP-dependent phosphorylation of L-homoserine to L-homoserine phosphate. This is Homoserine kinase from Buchnera aphidicola subsp. Cinara cedri (strain Cc).